Reading from the N-terminus, the 354-residue chain is Fusarinine C esterase sidJ (354 aa).

The protein belongs to the sidJ hydrolase family. As to quaternary structure, homodimer.

The catalysed reaction is fusarinine C + 3 H2O = 3 fusarinine + Fe(3+). Its function is as follows. Displays specific fusarinine C (FsC) esterase activity but does not hydrolyze triacetylfusarinine C (TAFC), which has the same core structure as fusarinine C. Both extra- and intracellular siderophores have been shown to be crucial for the virulence. Subsequent to chelation of iron and uptake, FsC and TAFC are hydrolyzed and the iron is transferred to the metabolism or to the intracellular siderophore ferricrocin (FC) for transport and storage of iron. This chain is Fusarinine C esterase sidJ, found in Aspergillus fumigatus (strain ATCC MYA-4609 / CBS 101355 / FGSC A1100 / Af293) (Neosartorya fumigata).